The chain runs to 354 residues: Serum paraoxonase/arylesterase 2 (354 aa).

Cysteine 42 and cysteine 352 are oxidised to a cystine. Residues glutamate 53 and aspartate 54 each coordinate Ca(2+). The active-site Proton acceptor is the histidine 114. 4 residues coordinate Ca(2+): isoleucine 116, asparagine 167, aspartate 168, and asparagine 223. An N-linked (GlcNAc...) asparagine glycan is attached at asparagine 254. Ca(2+) is bound by residues aspartate 268 and asparagine 269. N-linked (GlcNAc...) asparagine glycans are attached at residues asparagine 269 and asparagine 323.

Belongs to the paraoxonase family. In terms of assembly, homotrimer. Ca(2+) serves as cofactor. In terms of processing, glycosylated. The signal sequence is not cleaved.

The protein resides in the membrane. It catalyses the reaction a phenyl acetate + H2O = a phenol + acetate + H(+). The catalysed reaction is an N-acyl-L-homoserine lactone + H2O = an N-acyl-L-homoserine + H(+). Capable of hydrolyzing lactones and a number of aromatic carboxylic acid esters. The polypeptide is Serum paraoxonase/arylesterase 2 (PON2) (Bos taurus (Bovine)).